The following is a 620-amino-acid chain: Altered inheritance of mitochondria protein 9, mitochondrial (620 aa).

The transit peptide at 1-35 (MLSRVARNSSLLKQLPKLRQTTVLPVVLKNSIRFH) directs the protein to the mitochondrion.

The protein belongs to the AIM9 family.

It localises to the mitochondrion. This chain is Altered inheritance of mitochondria protein 9, mitochondrial (AIM9), found in Candida tropicalis (strain ATCC MYA-3404 / T1) (Yeast).